The primary structure comprises 286 residues: ATP-binding protein ChvD (286 aa).

Residues 21–85 (KLQDMIDSQN…DLLLLDEPTN (65 aa)) enclose the ABC transporter domain.

It belongs to the ABC transporter superfamily.

Its function is as follows. The induction of virG by growth under acidic conditions and by phosphate starvation, in the absence of plant inducers, is influenced by ChvD. This is ATP-binding protein ChvD (chvD) from Rhizobium radiobacter (Agrobacterium tumefaciens).